The primary structure comprises 184 residues: Probable chemoreceptor glutamine deamidase CheD (184 aa).

The protein belongs to the CheD family.

The enzyme catalyses L-glutaminyl-[protein] + H2O = L-glutamyl-[protein] + NH4(+). Functionally, probably deamidates glutamine residues to glutamate on methyl-accepting chemotaxis receptors (MCPs), playing an important role in chemotaxis. In Rhizobium etli (strain CIAT 652), this protein is Probable chemoreceptor glutamine deamidase CheD.